The primary structure comprises 71 residues: Protein SlyX homolog (71 aa).

It belongs to the SlyX family.

This is Protein SlyX homolog from Rhodospirillum rubrum (strain ATCC 11170 / ATH 1.1.1 / DSM 467 / LMG 4362 / NCIMB 8255 / S1).